A 1059-amino-acid chain; its full sequence is Putative ATP-dependent RNA helicase BoYb (1059 aa).

A Q motif motif is present at residues 54-82 (RRFAEVSLLPDILETMRNLGLNRLLRLQS). The 198-residue stretch at 87 to 284 (HLAGGSGHGA…RAVNDKPALV (198 aa)) folds into the Helicase ATP-binding domain. Position 100 to 107 (100 to 107 (GSPASGRT)) interacts with ATP. A DEAD box motif is present at residues 230 to 233 (DDVD). The region spanning 575–639 (PPVAGAICMY…GKLFECPEAL (65 aa)) is the Tudor domain. The tract at residues 756 to 787 (VQDSKEKANSKPHEKMKGKMTDQPAKLQSQPP) is disordered. Positions 757–775 (QDSKEKANSKPHEKMKGKM) are enriched in basic and acidic residues.

It localises to the cytoplasm. It carries out the reaction ATP + H2O = ADP + phosphate + H(+). Involved in primary piRNA biogenesis in germline cells. This chain is Putative ATP-dependent RNA helicase BoYb (BoYb), found in Drosophila melanogaster (Fruit fly).